Consider the following 61-residue polypeptide: uncharacterized protein (61 aa).

The protein belongs to the DUP/COS family.

This is an uncharacterized protein from Saccharomyces cerevisiae (strain ATCC 204508 / S288c) (Baker's yeast).